We begin with the raw amino-acid sequence, 258 residues long: Hydroxyacylglutathione hydrolase cytoplasmic (258 aa).

Zn(2+) is bound by residues His54 and His56. Fe cation contacts are provided by Asp58 and His59. His112 and Asp135 together coordinate Zn(2+). Residue Asp135 coordinates Fe cation. Residues 144 to 146 (KFF) and 174 to 176 (HEY) contribute to the substrate site. His174 contributes to the Fe cation binding site.

It belongs to the metallo-beta-lactamase superfamily. Glyoxalase II family. Homodimer. The cofactor is Fe(2+). Requires Zn(2+) as cofactor. It depends on Fe(3+) as a cofactor. In terms of tissue distribution, mainly expressed in flowers and flower buds. Also detected in roots and leaves.

It is found in the cytoplasm. The catalysed reaction is an S-(2-hydroxyacyl)glutathione + H2O = a 2-hydroxy carboxylate + glutathione + H(+). The protein operates within secondary metabolite metabolism; methylglyoxal degradation; (R)-lactate from methylglyoxal: step 2/2. Functionally, thiolesterase that catalyzes the hydrolysis of S-D-lactoyl-glutathione to form glutathione and D-lactic acid. The chain is Hydroxyacylglutathione hydrolase cytoplasmic (GLX2-2) from Arabidopsis thaliana (Mouse-ear cress).